We begin with the raw amino-acid sequence, 277 residues long: Probable cyclic nucleotide phosphodiesterase MCR_0369 (277 aa).

Positions 17, 19, 53, 83, 165, 204, and 206 each coordinate Fe cation. Residues His-19, Asp-53, and 83–84 (NH) contribute to the AMP site. An AMP-binding site is contributed by His-206.

The protein belongs to the cyclic nucleotide phosphodiesterase class-III family. Fe(2+) is required as a cofactor.

This is Probable cyclic nucleotide phosphodiesterase MCR_0369 from Moraxella catarrhalis (strain BBH18).